Reading from the N-terminus, the 872-residue chain is Leucine-rich repeat-containing protein 66 (872 aa).

Residues 4–24 form a helical membrane-spanning segment; sequence FYVRVTILVTGLCFVETVTTP. N-linked (GlcNAc...) asparagine glycans are attached at residues N45 and N108. LRR repeat units follow at residues 142–164, 165–186, 189–210, 213–234, and 239–259; these read RLQV…WKLK, SLRS…DFHG, QLES…AFKG, KLQV…VTIA, and HLEL…VNFQ. The interval 339 to 363 is disordered; sequence LRGMWPQSPVELRDSQDEQVTDRKD. A compositionally biased stretch (basic and acidic residues) spans 349–363; the sequence is ELRDSQDEQVTDRKD. Residues 371–391 form a helical membrane-spanning segment; the sequence is LAICLSVFITFVVAFCLGAFA. Positions 467–483 are enriched in polar residues; the sequence is QMLGSNGTDPGHQQSPE. Disordered regions lie at residues 467 to 501, 560 to 579, 695 to 761, and 776 to 872; these read QMLG…VLPS, GTFP…SQPR, NYES…SQRI, and LISG…SKHW. N-linked (GlcNAc...) asparagine glycosylation is present at N472. Basic and acidic residues predominate over residues 484-493; it reads QLKDSNESRS. Phosphoserine is present on S718. Composition is skewed to polar residues over residues 725–736, 746–760, and 785–805; these read SVENDGTSQPLP, SVTS…TSQR, and CETN…STWP. S752 carries the phosphoserine modification. The segment covering 831–841 has biased composition (basic and acidic residues); it reads VDWHYSLRDLE.

It localises to the membrane. The chain is Leucine-rich repeat-containing protein 66 (Lrrc66) from Mus musculus (Mouse).